The chain runs to 205 residues: LexA repressor (205 aa).

Residues 28-48 constitute a DNA-binding region (H-T-H motif); that stretch reads RAEIAASLGFRSPNAAEEHLK. Residues Ser122 and Lys159 each act as for autocatalytic cleavage activity in the active site.

The protein belongs to the peptidase S24 family. In terms of assembly, homodimer.

The catalysed reaction is Hydrolysis of Ala-|-Gly bond in repressor LexA.. Its function is as follows. Represses a number of genes involved in the response to DNA damage (SOS response), including recA and lexA. Binds to the 16 bp palindromic sequence 5'-CTGTATATATATACAG-3'. In the presence of single-stranded DNA, RecA interacts with LexA causing an autocatalytic cleavage which disrupts the DNA-binding part of LexA, leading to derepression of the SOS regulon and eventually DNA repair. The chain is LexA repressor from Providencia rettgeri.